We begin with the raw amino-acid sequence, 593 residues long: Lipolysis-stimulated lipoprotein receptor (593 aa).

The N-terminal stretch at 1–35 (MAPAAGACAGAPDSHPATVVFVCLFLIIFCPDPAS) is a signal peptide. The Extracellular segment spans residues 36–206 (AIQVTVSDPY…PGFRAGPLED (171 aa)). An Ig-like V-type domain is found at 89–181 (PASVDNQLNA…DLDGNNEAYA (93 aa)). An intrachain disulfide couples cysteine 113 to cysteine 165. Residues 207–227 (WLFVVVVCLASLLLFLLLGIC) form a helical membrane-spanning segment. Residues 228-593 (WCQCCPHTCC…LALSRESLVV (366 aa)) lie on the Cytoplasmic side of the membrane. Threonine 283 carries the phosphothreonine modification. Phosphoserine occurs at positions 308, 314, 332, 375, and 379. The segment covering 375 to 387 (SEVTSLHEDDWRS) has biased composition (basic and acidic residues). The tract at residues 375–578 (SEVTSLHEDD…ETDSQASRER (204 aa)) is disordered. Threonine 396 bears the Phosphothreonine mark. Phosphoserine occurs at positions 407, 410, and 436. A compositionally biased stretch (basic and acidic residues) spans 435–444 (RSVDALDDIN). Positions 445–460 (RPGSTESGRSSPPSSG) are enriched in low complexity. Phosphoserine occurs at positions 471 and 473. Basic and acidic residues predominate over residues 472 to 550 (RSRDDLYDPD…GSGERRRVYR (79 aa)). Tyrosine 478 carries the post-translational modification Phosphotyrosine. Serine 575 is subject to Phosphoserine. Lysine 582 participates in a covalent cross-link: Glycyl lysine isopeptide (Lys-Gly) (interchain with G-Cter in ubiquitin). Phosphoserine occurs at positions 587 and 590.

This sequence belongs to the immunoglobulin superfamily. LISCH7 family. As to quaternary structure, homotrimer or homotetramer constituted of isoform 1 and/or isoform 2 and isoform 3. Assembles into cell-cell contacts. Interacts (via the cytoplasmic domain) with MARVELD2 (via C-terminal cytoplasmic domain); the interaction is required to recruit MARVELD2 to tricellular contacts. Interacts with OCLN. In terms of processing, phosphorylation at Ser-308 by MAPK8/JNK1 and MAPK9/JNK2 may be required for exclusive localization at tricellular tight junstions. Post-translationally, polyubiquitinated at Lys-582 via 'Lys-63'-linked ubiquitin chains; deubiquitinated by USP53. As to expression, specifically expressed in liver. Also detected in kidney and lung.

The protein resides in the cell membrane. The protein localises to the cell junction. It localises to the tight junction. In terms of biological role, probable role in the clearance of triglyceride-rich lipoprotein from blood. Binds chylomicrons, LDL and VLDL in presence of free fatty acids and allows their subsequent uptake in the cells. Maintains epithelial barrier function by recruiting MARVELD2/tricellulin to tricellular tight junctions. The chain is Lipolysis-stimulated lipoprotein receptor from Rattus norvegicus (Rat).